The chain runs to 229 residues: UPF0758 protein Cagg_0777 (229 aa).

Residues 105–227 enclose the MPN domain; that stretch reads PIRSPGDVAA…YVSLRERGIG (123 aa). The Zn(2+) site is built by His176, His178, and Asp189. The short motif at 176 to 189 is the JAMM motif element; the sequence is HNHPSGEATPSPED.

It belongs to the UPF0758 family.

This Chloroflexus aggregans (strain MD-66 / DSM 9485) protein is UPF0758 protein Cagg_0777.